The chain runs to 226 residues: UPF0758 protein LL1007 (226 aa).

The region spanning 103-225 (QVLSSREYGL…YFSFREEEIR (123 aa)) is the MPN domain. The Zn(2+) site is built by histidine 174, histidine 176, and aspartate 187. The JAMM motif motif lies at 174 to 187 (HNHPSGNLKPSQAD).

Belongs to the UPF0758 family.

The chain is UPF0758 protein LL1007 from Lactococcus lactis subsp. lactis (strain IL1403) (Streptococcus lactis).